Reading from the N-terminus, the 271-residue chain is Ribosomal RNA small subunit methyltransferase A (271 aa).

Residues N19, L21, G46, E67, D92, and N113 each coordinate S-adenosyl-L-methionine.

This sequence belongs to the class I-like SAM-binding methyltransferase superfamily. rRNA adenine N(6)-methyltransferase family. RsmA subfamily.

The protein localises to the cytoplasm. It catalyses the reaction adenosine(1518)/adenosine(1519) in 16S rRNA + 4 S-adenosyl-L-methionine = N(6)-dimethyladenosine(1518)/N(6)-dimethyladenosine(1519) in 16S rRNA + 4 S-adenosyl-L-homocysteine + 4 H(+). Its function is as follows. Specifically dimethylates two adjacent adenosines (A1518 and A1519) in the loop of a conserved hairpin near the 3'-end of 16S rRNA in the 30S particle. May play a critical role in biogenesis of 30S subunits. In Photobacterium profundum (strain SS9), this protein is Ribosomal RNA small subunit methyltransferase A.